The chain runs to 270 residues: Sulfur carrier protein FdhD (270 aa).

2 stretches are compositionally biased toward basic and acidic residues: residues 1–10 (MSMQDHDRTE) and 20–30 (RHLDGSSRPDW). The tract at residues 1–30 (MSMQDHDRTEQGMTSLAVTRHLDGSSRPDW) is disordered. C117 serves as the catalytic Cysteine persulfide intermediate.

Belongs to the FdhD family.

The protein localises to the cytoplasm. Its function is as follows. Required for formate dehydrogenase (FDH) activity. Acts as a sulfur carrier protein that transfers sulfur from IscS to the molybdenum cofactor prior to its insertion into FDH. In Chromobacterium violaceum (strain ATCC 12472 / DSM 30191 / JCM 1249 / CCUG 213 / NBRC 12614 / NCIMB 9131 / NCTC 9757 / MK), this protein is Sulfur carrier protein FdhD.